A 636-amino-acid polypeptide reads, in one-letter code: DNA ligase (636 aa).

Lys113 serves as the catalytic N6-AMP-lysine intermediate. Residues 560–636 form the BRCT domain; that stretch reads NSEGIFQNQT…KSSFSKKFEK (77 aa).

Belongs to the NAD-dependent DNA ligase family.

It carries out the reaction NAD(+) + (deoxyribonucleotide)n-3'-hydroxyl + 5'-phospho-(deoxyribonucleotide)m = (deoxyribonucleotide)n+m + AMP + beta-nicotinamide D-nucleotide.. Catalyzes the formation of phosphodiester linkages between 5'-phosphoryl and 3'-hydroxyl groups in double-stranded DNA using NAD as a coenzyme and as the energy source for the reaction. This is DNA ligase from Acanthamoeba polyphaga (Amoeba).